The primary structure comprises 536 residues: Testis-specific expressed protein 55 (536 aa).

Low complexity predominate over residues 1-11; it reads MEEPPQEALAE. Disordered regions lie at residues 1–287 and 328–348; these read MEEP…PGTS and SNAD…QTDH. Residues 35 to 52 are compositionally biased toward basic and acidic residues; the sequence is QKNQAERKADNHTAHRIA. Composition is skewed to polar residues over residues 62-85 and 105-136; these read QAES…STPG and QVNQ…QVSG. Basic and acidic residues-rich tracts occupy residues 138-158 and 173-222; these read TEER…ERRT and RGSR…ERRP. Low complexity predominate over residues 226–242; the sequence is IDSGSSVPSDQSPSVQI. A compositionally biased stretch (polar residues) spans 243–255; sequence DSGSSVPSDQRPS. Over residues 339–348 the composition is skewed to basic and acidic residues; the sequence is HYTESDQTDH.

As to expression, testis-specific.

It is found in the nucleus. The protein resides in the cell projection. The protein localises to the cilium. Its subcellular location is the flagellum. This is Testis-specific expressed protein 55 from Homo sapiens (Human).